The primary structure comprises 192 residues: MSAVWIAVIAISLLGLIFGLILGYASRRFAVQDDPVVEKIDELLPQSQCGQCGYPGCRPYAEAVGAQGEKINRCAPGGEAVMLKIAALLNVDPQPVDGDEQEAEPVRMLAVIDEPNCIGCTKCIQACPVDAIVGATRAMHTVMNDLCTGCNLCVAPCPTQCISLVPVATTPETWKWDLHAIPVRNIPVEQHV.

The interval 1–26 (MSAVWIAVIAISLLGLIFGLILGYAS) is hydrophobic. Positions 32-91 (QDDPVVEKIDELLPQSQCGQCGYPGCRPYAEAVGAQGEKINRCAPGGEAVMLKIAALLNV) constitute a 4Fe-4S domain. Residues cysteine 49, cysteine 52, cysteine 57, cysteine 74, cysteine 117, cysteine 120, cysteine 123, cysteine 127, cysteine 147, cysteine 150, cysteine 153, and cysteine 157 each coordinate [4Fe-4S] cluster. 4Fe-4S ferredoxin-type domains lie at 108–137 (MLAV…GATR) and 138–167 (AMHT…LVPV).

This sequence belongs to the 4Fe4S bacterial-type ferredoxin family. RnfB subfamily. In terms of assembly, the complex is composed of six subunits: RnfA, RnfB, RnfC, RnfD, RnfE and RnfG. [4Fe-4S] cluster serves as cofactor.

It is found in the cell inner membrane. In terms of biological role, part of a membrane-bound complex that couples electron transfer with translocation of ions across the membrane. The polypeptide is Ion-translocating oxidoreductase complex subunit B (Klebsiella pneumoniae (strain 342)).